Consider the following 1003-residue polypeptide: PHD finger protein 12 (1003 aa).

Positions A29–C59 are disordered. Positions K32–C59 are enriched in basic and acidic residues. The PHD-type 1 zinc finger occupies H56–R105. Zn(2+) contacts are provided by C59, S61, C62, H79, and C82. Disordered stretches follow at residues E110–V183 and T234–K255. 2 positions are modified to phosphoserine: S131 and S134. The span at L138–A161 shows a compositional bias: basic and acidic residues. Polar residues predominate over residues G165–S178. An SIN3 interacting domain 1 region spans residues V202–S241. Residues V271–H321 form a PHD-type 2; atypical zinc finger. Residues C274, C277, C289, C292, H297, C300, C315, and H318 each coordinate Zn(2+). Residues N328–P364 are SIN3 interacting domain 2. A Glycyl lysine isopeptide (Lys-Gly) (interchain with G-Cter in SUMO2) cross-link involves residue K467. Disordered regions lie at residues K531–R583 and H641–P671. Residue S555 is modified to Phosphoserine. Phosphothreonine occurs at positions 557 and 570. Polar residues predominate over residues H641–S656. At T670 the chain carries Phosphothreonine. The FHA domain maps to L814–Y868. The segment at R894–P922 is disordered. K899 is covalently cross-linked (Glycyl lysine isopeptide (Lys-Gly) (interchain with G-Cter in SUMO2)). A compositionally biased stretch (low complexity) spans E907–Q916. Residues K972, K986, and K990 each participate in a glycyl lysine isopeptide (Lys-Gly) (interchain with G-Cter in SUMO2) cross-link.

In terms of assembly, component of SIN3 complexes. Interacts with SIN3A in a complex composed of HDAC1, SAP30 and SIN3A. Component of the SIN3B complex, which includes SIN3B, HDAC2 or HDAC1, PHF12 and MORF4L1; interacts directly with all subunits. Interacts with TLE5. As to expression, expressed mainly in heart, brain, lung, liver and testis.

It localises to the nucleus. Transcriptional repressor acting as key scaffolding subunit of SIN3 complexes which contributes to complex assembly by contacting each core subunit domain, stabilizes the complex and constitutes the substrate receptor by recruiting the H3 histone tail. SIN3 complexes are composed of a SIN3 scaffold subunit, one catalytic core (HDAC1 or HDAC2) and 2 chromatin targeting modules. SIN3B complex represses transcription and counteracts the histone acetyltransferase activity of EP300 through the recognition H3K27ac marks by PHF12 and the activity of the histone deacetylase HDAC2. SIN3B complex is recruited downstream of the constitutively active genes transcriptional start sites through interaction with histones and mitigates histone acetylation and RNA polymerase II progression within transcribed regions contributing to the regulation of transcription. May also repress transcription in a SIN3A-independent manner through recruitment of functional TLE5 complexes to DNA. May also play a role in ribosomal biogenesis. The protein is PHD finger protein 12 of Mus musculus (Mouse).